Consider the following 346-residue polypeptide: Ferredoxin--NADP reductase (346 aa).

Glu35, Gln43, Tyr48, Val88, Phe122, Asp287, and Thr327 together coordinate FAD.

It belongs to the ferredoxin--NADP reductase type 2 family. Homodimer. Requires FAD as cofactor.

The enzyme catalyses 2 reduced [2Fe-2S]-[ferredoxin] + NADP(+) + H(+) = 2 oxidized [2Fe-2S]-[ferredoxin] + NADPH. In Oenococcus oeni (strain ATCC BAA-331 / PSU-1), this protein is Ferredoxin--NADP reductase.